A 629-amino-acid polypeptide reads, in one-letter code: 1-deoxy-D-xylulose-5-phosphate synthase (629 aa).

Thiamine diphosphate is bound by residues H72 and 113 to 115 (GHA). D144 is a Mg(2+) binding site. Residues 145–146 (GA), N174, Y287, and E370 each bind thiamine diphosphate. N174 is a binding site for Mg(2+).

This sequence belongs to the transketolase family. DXPS subfamily. In terms of assembly, homodimer. Mg(2+) serves as cofactor. It depends on thiamine diphosphate as a cofactor.

It carries out the reaction D-glyceraldehyde 3-phosphate + pyruvate + H(+) = 1-deoxy-D-xylulose 5-phosphate + CO2. It participates in metabolic intermediate biosynthesis; 1-deoxy-D-xylulose 5-phosphate biosynthesis; 1-deoxy-D-xylulose 5-phosphate from D-glyceraldehyde 3-phosphate and pyruvate: step 1/1. Its function is as follows. Catalyzes the acyloin condensation reaction between C atoms 2 and 3 of pyruvate and glyceraldehyde 3-phosphate to yield 1-deoxy-D-xylulose-5-phosphate (DXP). The polypeptide is 1-deoxy-D-xylulose-5-phosphate synthase (Prochlorococcus marinus (strain MIT 9301)).